Reading from the N-terminus, the 507-residue chain is Serine/threonine-protein kinase CBK1 (507 aa).

The segment at 1–30 is disordered; it reads MQKVSGSGKKTTAFQQRKSDSVYNNNEMNK. A Protein kinase domain is found at 126-431; the sequence is FHTVKVIGKG…ANDIKLHPFF (306 aa). Residues 132 to 140 and Lys155 each bind ATP; that span reads IGKGAFGEV. The active-site Proton acceptor is Asp249. The 74-residue stretch at 432 to 505 folds into the AGC-kinase C-terminal domain; it reads RGVNWDTIRE…KRFDMMTQKG (74 aa).

It belongs to the protein kinase superfamily. STE Ser/Thr protein kinase family. COT1 subfamily.

The catalysed reaction is L-seryl-[protein] + ATP = O-phospho-L-seryl-[protein] + ADP + H(+). It carries out the reaction L-threonyl-[protein] + ATP = O-phospho-L-threonyl-[protein] + ADP + H(+). Protein kinase that seems to play a role in signaling pathways necessary for cell growth and mating. The sequence is that of Serine/threonine-protein kinase CBK1 (CBK1) from Pneumocystis carinii.